The sequence spans 38 residues: Photosystem II reaction center protein L (38 aa).

A helical transmembrane segment spans residues 17–37; it reads SLYWGLLLIFVLAVSFSNYFF.

Belongs to the PsbL family. As to quaternary structure, PSII is composed of 1 copy each of membrane proteins PsbA, PsbB, PsbC, PsbD, PsbE, PsbF, PsbH, PsbI, PsbJ, PsbK, PsbL, PsbM, PsbT, PsbX, PsbY, PsbZ, Psb30/Ycf12, at least 3 peripheral proteins of the oxygen-evolving complex and a large number of cofactors. It forms dimeric complexes.

The protein resides in the plastid membrane. Its function is as follows. One of the components of the core complex of photosystem II (PSII). PSII is a light-driven water:plastoquinone oxidoreductase that uses light energy to abstract electrons from H(2)O, generating O(2) and a proton gradient subsequently used for ATP formation. It consists of a core antenna complex that captures photons, and an electron transfer chain that converts photonic excitation into a charge separation. This subunit is found at the monomer-monomer interface and is required for correct PSII assembly and/or dimerization. This is Photosystem II reaction center protein L from Aneura mirabilis (Parasitic liverwort).